An 89-amino-acid polypeptide reads, in one-letter code: Small ribosomal subunit protein uS15 (89 aa).

The disordered stretch occupies residues 1–24 (MSLNAETKAGIVEKYRRDPSDTGS). Residues 11–20 (IVEKYRRDPS) show a composition bias toward basic and acidic residues.

It belongs to the universal ribosomal protein uS15 family. In terms of assembly, part of the 30S ribosomal subunit. Forms a bridge to the 50S subunit in the 70S ribosome, contacting the 23S rRNA.

Its function is as follows. One of the primary rRNA binding proteins, it binds directly to 16S rRNA where it helps nucleate assembly of the platform of the 30S subunit by binding and bridging several RNA helices of the 16S rRNA. Functionally, forms an intersubunit bridge (bridge B4) with the 23S rRNA of the 50S subunit in the ribosome. The polypeptide is Small ribosomal subunit protein uS15 (Thioalkalivibrio sulfidiphilus (strain HL-EbGR7)).